Reading from the N-terminus, the 229-residue chain is C-&gt;U-editing enzyme APOBEC-1 (229 aa).

The CMP/dCMP-type deaminase domain occupies Val-10–Leu-134. His-61 provides a ligand contact to Zn(2+). Residue Glu-63 is the Proton donor of the active site. Positions 93 and 96 each coordinate Zn(2+).

The protein belongs to the cytidine and deoxycytidylate deaminase family. In terms of assembly, homodimer. Interacts with A1CF; form an mRNA editing complex. Interacts with RBM47; form an mRNA editing complex. Found in a complex with CELF2/CUGBP2 and A1CF. Interacts with HNRPAB. Interacts with SYNCRIP. It depends on Zn(2+) as a cofactor.

The protein resides in the cytoplasm. The protein localises to the nucleus. It catalyses the reaction a cytidine in mRNA + H2O + H(+) = a uridine in mRNA + NH4(+). It carries out the reaction cytidine(6666) in apoB mRNA + H2O + H(+) = uridine(6666) in apoB mRNA + NH4(+). Cytidine deaminase catalyzing the cytidine to uridine postranscriptional editing of a variety of mRNAs. Form complexes with cofactors that confer differential editing activity and selectivity. Responsible for the postranscriptional editing of a CAA codon for Gln to a UAA codon for stop in the apolipoprotein B mRNA. Also involved in CGA (Arg) to UGA (Stop) editing in the NF1 mRNA. May also play a role in the epigenetic regulation of gene expression by participating in DNA demethylation. The protein is C-&gt;U-editing enzyme APOBEC-1 of Mesocricetus auratus (Golden hamster).